Reading from the N-terminus, the 520-residue chain is Ribonuclease Y (520 aa).

A helical membrane pass occupies residues 3–23; that stretch reads FILVLCTVSSLFVGGGTGIFL. One can recognise a KH domain in the interval 209–272; the sequence is TVTAVTLPSE…QVAKMALERL (64 aa). Positions 335–429 constitute an HD domain; that stretch reads VLRHSIEVAS…VQASDCLSGA (95 aa).

This sequence belongs to the RNase Y family.

It is found in the cell membrane. Its function is as follows. Endoribonuclease that initiates mRNA decay. In Lawsonia intracellularis (strain PHE/MN1-00), this protein is Ribonuclease Y.